Here is a 510-residue protein sequence, read N- to C-terminus: NAD(P)H-quinone oxidoreductase subunit 2 A, chloroplastic (510 aa).

12 helical membrane passes run 24-44, 59-79, 99-119, 124-144, 149-169, 183-203, 229-249, 295-315, 323-343, 354-374, 395-415, and 418-438; these read LLLF…GLIL, WFYF…LFRW, IFQF…VEYI, MAIT…MFLC, LITL…LSGY, YLLM…WLYG, ISIA…PAPF, WHLL…LIAI, MLAY…IVGD, YMLF…SFGL, ALSL…AGFF, and LHLF…IGLL.

Belongs to the complex I subunit 2 family. NDH is composed of at least 16 different subunits, 5 of which are encoded in the nucleus.

It localises to the plastid. It is found in the chloroplast thylakoid membrane. The enzyme catalyses a plastoquinone + NADH + (n+1) H(+)(in) = a plastoquinol + NAD(+) + n H(+)(out). The catalysed reaction is a plastoquinone + NADPH + (n+1) H(+)(in) = a plastoquinol + NADP(+) + n H(+)(out). Functionally, NDH shuttles electrons from NAD(P)H:plastoquinone, via FMN and iron-sulfur (Fe-S) centers, to quinones in the photosynthetic chain and possibly in a chloroplast respiratory chain. The immediate electron acceptor for the enzyme in this species is believed to be plastoquinone. Couples the redox reaction to proton translocation, and thus conserves the redox energy in a proton gradient. The protein is NAD(P)H-quinone oxidoreductase subunit 2 A, chloroplastic of Dioscorea elephantipes (Elephant's foot yam).